The chain runs to 483 residues: Wax ester synthase/diacylglycerol acyltransferase 10 (483 aa).

At 1–203 (MTKEEVEEEP…SINAVYYAVR (203 aa)) the chain is on the cytoplasmic side. The active-site Proton acceptor is the histidine 143. Residues 204–222 (LIWNTIVDLLLLWATSLFF) traverse the membrane as a helical segment. At 223–483 (KDTETPISEG…MKDTLSGKSD (261 aa)) the chain is on the lumenal side. N-linked (GlcNAc...) asparagine glycosylation is found at asparagine 394 and asparagine 399.

In the N-terminal section; belongs to the long-chain O-acyltransferase family. In terms of tissue distribution, mostly expressed in roots.

Its subcellular location is the cell membrane. It localises to the endoplasmic reticulum membrane. It carries out the reaction an acyl-CoA + a 1,2-diacyl-sn-glycerol = a triacyl-sn-glycerol + CoA. The enzyme catalyses a long chain fatty alcohol + a fatty acyl-CoA = a wax ester + CoA. The protein operates within glycerolipid metabolism; triacylglycerol biosynthesis. Its pathway is lipid metabolism. In terms of biological role, bifunctional wax ester synthase/diacylglycerol acyltransferase. Involved in cuticular wax biosynthesis. The sequence is that of Wax ester synthase/diacylglycerol acyltransferase 10 from Arabidopsis thaliana (Mouse-ear cress).